The primary structure comprises 550 residues: CTP synthase (550 aa).

Positions M1–L270 are amidoligase domain. S13 is a CTP binding site. UTP is bound at residue S13. ATP is bound by residues S14–I19 and D71. Mg(2+) is bound by residues D71 and E144. CTP-binding positions include D151–E153, K191–Q196, and K227. UTP is bound by residues K191–Q196 and K227. The Glutamine amidotransferase type-1 domain occupies T295 to R547. An L-glutamine-binding site is contributed by G356. Residue C383 is the Nucleophile; for glutamine hydrolysis of the active site. L-glutamine is bound by residues L384–Q387, E407, and R473. Catalysis depends on residues H520 and E522.

It belongs to the CTP synthase family. Homotetramer.

The enzyme catalyses UTP + L-glutamine + ATP + H2O = CTP + L-glutamate + ADP + phosphate + 2 H(+). The catalysed reaction is L-glutamine + H2O = L-glutamate + NH4(+). It carries out the reaction UTP + NH4(+) + ATP = CTP + ADP + phosphate + 2 H(+). It functions in the pathway pyrimidine metabolism; CTP biosynthesis via de novo pathway; CTP from UDP: step 2/2. Allosterically activated by GTP, when glutamine is the substrate; GTP has no effect on the reaction when ammonia is the substrate. The allosteric effector GTP functions by stabilizing the protein conformation that binds the tetrahedral intermediate(s) formed during glutamine hydrolysis. Inhibited by the product CTP, via allosteric rather than competitive inhibition. Catalyzes the ATP-dependent amination of UTP to CTP with either L-glutamine or ammonia as the source of nitrogen. Regulates intracellular CTP levels through interactions with the four ribonucleotide triphosphates. The sequence is that of CTP synthase from Cupriavidus pinatubonensis (strain JMP 134 / LMG 1197) (Cupriavidus necator (strain JMP 134)).